We begin with the raw amino-acid sequence, 227 residues long: 2-C-methyl-D-erythritol 4-phosphate cytidylyltransferase (227 aa).

The protein belongs to the IspD/TarI cytidylyltransferase family. IspD subfamily.

The catalysed reaction is 2-C-methyl-D-erythritol 4-phosphate + CTP + H(+) = 4-CDP-2-C-methyl-D-erythritol + diphosphate. It participates in isoprenoid biosynthesis; isopentenyl diphosphate biosynthesis via DXP pathway; isopentenyl diphosphate from 1-deoxy-D-xylulose 5-phosphate: step 2/6. Catalyzes the formation of 4-diphosphocytidyl-2-C-methyl-D-erythritol from CTP and 2-C-methyl-D-erythritol 4-phosphate (MEP). The polypeptide is 2-C-methyl-D-erythritol 4-phosphate cytidylyltransferase (Bordetella bronchiseptica (strain ATCC BAA-588 / NCTC 13252 / RB50) (Alcaligenes bronchisepticus)).